A 336-amino-acid chain; its full sequence is Polyprenyl transferase dpasC (336 aa).

The helical transmembrane segment at L34–F54 threads the bilayer. N66 is a glycosylation site (N-linked (GlcNAc...) asparagine). Helical transmembrane passes span A80–I100, Q125–L145, Y181–G201, F205–F225, H253–L273, N274–L294, and L311–L331.

This sequence belongs to the UbiA prenyltransferase family. The cofactor is Mg(2+).

It is found in the membrane. Its pathway is secondary metabolite biosynthesis; terpenoid biosynthesis. Functionally, polyprenyl transferase; part of the gene cluster that mediates the biosynthesis of the diterpenoid pyrones subglutinols A and B. The first step of the pathway is the synthesis of the alpha-pyrone moiety by the polyketide synthase dpasA via condensation of one acetyl-CoA starter unit with 3 malonyl-CoA units and 2 methylations. The alpha-pyrone is then combined with geranylgeranyl pyrophosphate (GGPP) formed by the GGPP synthase dpasD through the action of the prenyltransferase dpasC to yield a linear alpha-pyrone diterpenoid. Subsequent steps in the diterpenoid pyrone biosynthetic pathway involve the decalin core formation, which is initiated by the epoxidation of the C10-C11 olefin by the FAD-dependent oxidoreductase dpasE, and is followed by a cyclization cascade catalyzed by the terpene cyclase dpasB. The FAD-linked oxidoreductase dpasF is then involved in tetrahydrofuran (THF) ring formation at the C5 unit to complete the formation of subglutinols A and B. DpasF possesses also an additional catalytic ability of multi-step oxidations to generate a new DDP analog with an enone system at the C5 named FDDP A. This Apiospora sacchari (Arthrinium sacchari) protein is Polyprenyl transferase dpasC.